We begin with the raw amino-acid sequence, 2220 residues long: Non-reducing polyketide synthase stbA (2220 aa).

An N-terminal acylcarrier protein transacylase domain (SAT) region spans residues 10–255 (IFSPQNSPPK…HDATNTDMAQ (246 aa)). Residues 379-803 (SDAIAVVGAG…GSNSALICSE (425 aa)) enclose the Ketosynthase family 3 (KS3) domain. Catalysis depends on for beta-ketoacyl synthase activity residues Cys-551, His-687, and His-726. Residues 906–1207 (LAFSGQSRTN…ADATQHTFQA (302 aa)) form a malonyl-CoA:ACP transacylase (MAT) domain region. Ser-993 acts as the For acyl/malonyl transferase activity in catalysis. The segment at 1287–1414 (EPRAAQLVRY…GDFTMTAGPH (128 aa)) is N-terminal hotdog fold. Residues 1287–1589 (EPRAAQLVRY…FHKTSMTKLL (303 aa)) enclose the PKS/mFAS DH domain. Residues 1292–1588 (QLVRYKGALG…HFHKTSMTKL (297 aa)) form a product template (PT) domain region. The active-site Proton acceptor; for dehydratase activity is the His-1323. The tract at residues 1436–1589 (DAEKLRKRTA…FHKTSMTKLL (154 aa)) is C-terminal hotdog fold. Asp-1500 acts as the Proton donor; for dehydratase activity in catalysis. 2 consecutive Carrier domains span residues 1634–1711 (AAGP…SGGA) and 1742–1821 (PAGP…AADV). 2 positions are modified to O-(pantetheine 4'-phosphoryl)serine: Ser-1671 and Ser-1779. Positions 1879–2210 (TRFRMETVVY…YDFIFTELEN (332 aa)) are thioesterase (TE) domain. Residues Ser-1999 and Asp-2148 each act as for thioesterase activity in the active site.

The enzyme catalyses 3 malonyl-CoA + acetyl-CoA + 2 H(+) = orsellinate + 3 CO2 + 4 CoA. It functions in the pathway secondary metabolite biosynthesis; terpenoid biosynthesis. In terms of biological role, non-reducing polyketide synthase; part of the cluster that mediates the biosynthesis of LL-Z1272-beta, also known as ilicicolin B, a prenylated aryl-aldehyde produced by several fungi and that serves as a key pathway intermediate for many fungal meroterpenoids. The first step in the pathway is performed by the non-reducing polyketide synthase stbA that produces orsellinic acid by condensing acetyl-CoA with 3 malonyl-CoA units. The prenyltransferase stbC then prenylates orsenilic acid into grifolic acid. Finally, grifolic acid is reduced to ilicicolin B by the NRPS-like protein stbB. This Stachybotrys bisbyi (Hyalostachybotrys bisbyi) protein is Non-reducing polyketide synthase stbA.